The following is a 346-amino-acid chain: N-acetyl-gamma-glutamyl-phosphate reductase (346 aa).

C149 is a catalytic residue.

It belongs to the NAGSA dehydrogenase family. Type 1 subfamily.

The protein localises to the cytoplasm. The enzyme catalyses N-acetyl-L-glutamate 5-semialdehyde + phosphate + NADP(+) = N-acetyl-L-glutamyl 5-phosphate + NADPH + H(+). It functions in the pathway amino-acid biosynthesis; L-arginine biosynthesis; N(2)-acetyl-L-ornithine from L-glutamate: step 3/4. Catalyzes the NADPH-dependent reduction of N-acetyl-5-glutamyl phosphate to yield N-acetyl-L-glutamate 5-semialdehyde. The chain is N-acetyl-gamma-glutamyl-phosphate reductase from Desulfotalea psychrophila (strain LSv54 / DSM 12343).